The following is a 225-amino-acid chain: uncharacterized protein (225 aa).

The region spanning 114–219 is the Fe2OG dioxygenase domain; sequence DAEAIIMQVY…RLSVTMRRII (106 aa).

This sequence belongs to the iron/ascorbate-dependent oxidoreductase family.

Its subcellular location is the cytoplasm. The protein resides in the nucleus. This is an uncharacterized protein from Schizosaccharomyces pombe (strain 972 / ATCC 24843) (Fission yeast).